We begin with the raw amino-acid sequence, 532 residues long: Bone morphogenetic protein receptor type-1A (532 aa).

The signal sequence occupies residues 1 to 23 (MTQLYTYIRLLGACLFIISHVQG). Topologically, residues 24-152 (QNLDSMLHGT…IGPFFDGSVR (129 aa)) are extracellular. Disulfide bonds link Cys-61–Cys-82, Cys-63–Cys-67, and Cys-76–Cys-100. An N-linked (GlcNAc...) asparagine glycan is attached at Asn-73. A mediates specificity for BMP ligand region spans residues 107–109 (DFQ). 2 disulfide bridges follow: Cys-110/Cys-124 and Cys-125/Cys-130. The chain crosses the membrane as a helical span at residues 153-176 (WLAVLISMAVCIVAMIVFSSCFCY). Residues 177-532 (KHYCKSISSR…KMVESQDVKI (356 aa)) are Cytoplasmic-facing. A GS domain is found at 204–233 (ESLKDLIDQSQSSGSGSGLPLLVQRTIAKQ). The 292-residue stretch at 234–525 (IQMVRQVGKG…RIKKTLAKMV (292 aa)) folds into the Protein kinase domain. Residues 240 to 248 (VGKGRYGEV) and Lys-261 each bind ATP. Asp-362 acts as the Proton acceptor in catalysis.

The protein belongs to the protein kinase superfamily. TKL Ser/Thr protein kinase family. TGFB receptor subfamily. As to quaternary structure, interacts with low affinity with GDF5; positively regulates chondrocyte differentiation. Interacts with BMP4. Interacts with SCUBE3. Interacts with TSC22D1/TSC-22. Interacts with BMP2; the interaction may induce HAMP expression. Interacts with BMP6. Interacts with heterodimers composed of BMP2 and BMP6 in vitro; the interaction may induce HAMP expression. Requires Mg(2+) as cofactor. Mn(2+) serves as cofactor. Glycosylated.

Its subcellular location is the cell membrane. It is found in the cell surface. The catalysed reaction is L-threonyl-[receptor-protein] + ATP = O-phospho-L-threonyl-[receptor-protein] + ADP + H(+). It catalyses the reaction L-seryl-[receptor-protein] + ATP = O-phospho-L-seryl-[receptor-protein] + ADP + H(+). In terms of biological role, on ligand binding, forms a receptor complex consisting of two type II and two type I transmembrane serine/threonine kinases. Type II receptors phosphorylate and activate type I receptors which autophosphorylate, then bind and activate SMAD transcriptional regulators. Receptor for BMP2, BMP4, GDF5 and GDF6. Positively regulates chondrocyte differentiation through GDF5 interaction. Mediates induction of adipogenesis by GDF6. May promote the expression of HAMP, potentially via its interaction with BMP2. The protein is Bone morphogenetic protein receptor type-1A (Bmpr1a) of Rattus norvegicus (Rat).